An 807-amino-acid chain; its full sequence is Ribosome-releasing factor 2, mitochondrial (807 aa).

A mitochondrion-targeting transit peptide spans 1–18 (MFCRKYVFQTWKQLSRSY). The tr-type G domain occupies 27 to 315 (AKTRNIGIIA…GITKYLPSPL (289 aa)). Residues 36–43 (AHIDAGKT), 100–104 (DTPGH), and 154–157 (NKMD) contribute to the GTP site.

It belongs to the TRAFAC class translation factor GTPase superfamily. Classic translation factor GTPase family. EF-G/EF-2 subfamily.

It localises to the mitochondrion. Its function is as follows. Mitochondrial GTPase that mediates the disassembly of ribosomes from messenger RNA at the termination of mitochondrial protein biosynthesis. Not involved in the GTP-dependent ribosomal translocation step during translation elongation. The sequence is that of Ribosome-releasing factor 2, mitochondrial from Candida albicans (strain SC5314 / ATCC MYA-2876) (Yeast).